We begin with the raw amino-acid sequence, 525 residues long: NAD(P)H-quinone oxidoreductase chain 4-2 (525 aa).

14 helical membrane passes run 6 to 26, 36 to 56, 91 to 111, 115 to 135, 137 to 157, 169 to 189, 212 to 232, 243 to 263, 277 to 297, 314 to 334, 335 to 355, 375 to 397, 417 to 437, and 464 to 484; these read FPWL…IPII, WYAL…FYTS, LIIL…PVTL, LFYF…AVQD, LLFF…LAIW, FILY…TMAF, LLLY…IPLH, TAPA…YALI, FAPV…LTSF, MGFV…GAVL, QMVS…ATYD, IFAM…GFVA, VIVV…LLSM, and VFVI…PKLL.

Belongs to the complex I subunit 4 family.

The protein resides in the cellular thylakoid membrane. It carries out the reaction a plastoquinone + NADH + (n+1) H(+)(in) = a plastoquinol + NAD(+) + n H(+)(out). The enzyme catalyses a plastoquinone + NADPH + (n+1) H(+)(in) = a plastoquinol + NADP(+) + n H(+)(out). In terms of biological role, NDH-1 shuttles electrons from NAD(P)H, via FMN and iron-sulfur (Fe-S) centers, to quinones in the respiratory chain. The immediate electron acceptor for the enzyme in this species is believed to be plastoquinone. Couples the redox reaction to proton translocation (for every two electrons transferred, four hydrogen ions are translocated across the cytoplasmic membrane), and thus conserves the redox energy in a proton gradient. This Nostoc sp. (strain PCC 7120 / SAG 25.82 / UTEX 2576) protein is NAD(P)H-quinone oxidoreductase chain 4-2 (ndhD2).